A 232-amino-acid polypeptide reads, in one-letter code: tRNA (guanine-N(1)-)-methyltransferase (232 aa).

Gly116 lines the S-adenosyl-L-methionine pocket.

The protein belongs to the RNA methyltransferase TrmD family. In terms of assembly, homodimer.

It is found in the cytoplasm. The enzyme catalyses guanosine(37) in tRNA + S-adenosyl-L-methionine = N(1)-methylguanosine(37) in tRNA + S-adenosyl-L-homocysteine + H(+). Specifically methylates guanosine-37 in various tRNAs. This chain is tRNA (guanine-N(1)-)-methyltransferase, found in Chlorobium luteolum (strain DSM 273 / BCRC 81028 / 2530) (Pelodictyon luteolum).